A 267-amino-acid chain; its full sequence is MVKIAVCGAAGRMGGRIIAAVKEAEGVEICGALERPGHPMVGQDAGYNAGLGAIGVAISDDLNAVVQACDVLIDFTAPKVSLKNLEVCALYGKSIVIGSTGFTPEERALAAELARDIPVIIAPNMSVGVNVCFKVLADVAKILGEDFDVEIVESHHRLKKDSPSGTAVRMGEVVAGALGRDYNKVANYHREGICGERTHDEIGMQTVRGGDIVGEHTVYFIGMGERIEITHRAHTRDMFSRGSVRAAKWVVTAKQGVYDMQDVLGLR.

NAD(+)-binding positions include 8–13 (GAAGRM) and glutamate 34. Residue arginine 35 participates in NADP(+) binding. Residues 98 to 100 (GST) and 122 to 125 (APNM) each bind NAD(+). Histidine 155 acts as the Proton donor/acceptor in catalysis. Histidine 156 contacts (S)-2,3,4,5-tetrahydrodipicolinate. The active-site Proton donor is lysine 159. 165 to 166 (GT) serves as a coordination point for (S)-2,3,4,5-tetrahydrodipicolinate.

It belongs to the DapB family.

The protein resides in the cytoplasm. It catalyses the reaction (S)-2,3,4,5-tetrahydrodipicolinate + NAD(+) + H2O = (2S,4S)-4-hydroxy-2,3,4,5-tetrahydrodipicolinate + NADH + H(+). The enzyme catalyses (S)-2,3,4,5-tetrahydrodipicolinate + NADP(+) + H2O = (2S,4S)-4-hydroxy-2,3,4,5-tetrahydrodipicolinate + NADPH + H(+). It participates in amino-acid biosynthesis; L-lysine biosynthesis via DAP pathway; (S)-tetrahydrodipicolinate from L-aspartate: step 4/4. In terms of biological role, catalyzes the conversion of 4-hydroxy-tetrahydrodipicolinate (HTPA) to tetrahydrodipicolinate. The sequence is that of 4-hydroxy-tetrahydrodipicolinate reductase from Geobacter sp. (strain M21).